A 339-amino-acid polypeptide reads, in one-letter code: Anthranilate phosphoribosyltransferase (339 aa).

5-phospho-alpha-D-ribose 1-diphosphate contacts are provided by residues Gly81, 84 to 85 (GD), Ser89, 91 to 94 (NVSS), 109 to 117 (KHGNRALSS), and Ala121. Gly81 contacts anthranilate. Ser93 contacts Mg(2+). Asn112 provides a ligand contact to anthranilate. Arg167 contributes to the anthranilate binding site. Positions 225 and 226 each coordinate Mg(2+).

The protein belongs to the anthranilate phosphoribosyltransferase family. Homodimer. Mg(2+) is required as a cofactor.

The catalysed reaction is N-(5-phospho-beta-D-ribosyl)anthranilate + diphosphate = 5-phospho-alpha-D-ribose 1-diphosphate + anthranilate. The protein operates within amino-acid biosynthesis; L-tryptophan biosynthesis; L-tryptophan from chorismate: step 2/5. Catalyzes the transfer of the phosphoribosyl group of 5-phosphorylribose-1-pyrophosphate (PRPP) to anthranilate to yield N-(5'-phosphoribosyl)-anthranilate (PRA). This chain is Anthranilate phosphoribosyltransferase, found in Brucella suis (strain ATCC 23445 / NCTC 10510).